Here is a 138-residue protein sequence, read N- to C-terminus: ATP synthase epsilon chain (138 aa).

This sequence belongs to the ATPase epsilon chain family. In terms of assembly, F-type ATPases have 2 components, CF(1) - the catalytic core - and CF(0) - the membrane proton channel. CF(1) has five subunits: alpha(3), beta(3), gamma(1), delta(1), epsilon(1). CF(0) has three main subunits: a, b and c.

The protein localises to the cell membrane. Functionally, produces ATP from ADP in the presence of a proton gradient across the membrane. The polypeptide is ATP synthase epsilon chain (Caldanaerobacter subterraneus subsp. tengcongensis (strain DSM 15242 / JCM 11007 / NBRC 100824 / MB4) (Thermoanaerobacter tengcongensis)).